The sequence spans 176 residues: PKHD-type hydroxylase Mfla_0096 (176 aa).

The 70-residue stretch at 78 to 147 (KVFPPLFNRY…NQIARGTYGA (70 aa)) folds into the Fe2OG dioxygenase domain.

The cofactor is Fe(2+). L-ascorbate is required as a cofactor.

The chain is PKHD-type hydroxylase Mfla_0096 from Methylobacillus flagellatus (strain ATCC 51484 / DSM 6875 / VKM B-1610 / KT).